Reading from the N-terminus, the 296-residue chain is Light-independent protochlorophyllide reductase iron-sulfur ATP-binding protein (296 aa).

ATP contacts are provided by residues 39-44 and Lys68; that span reads GIGKST. Ser43 lines the Mg(2+) pocket. Residues Cys124 and Cys158 each contribute to the [4Fe-4S] cluster site. 209 to 210 serves as a coordination point for ATP; sequence NR.

The protein belongs to the NifH/BchL/ChlL family. In terms of assembly, homodimer. Protochlorophyllide reductase is composed of three subunits; ChlL, ChlN and ChlB. [4Fe-4S] cluster is required as a cofactor.

The catalysed reaction is chlorophyllide a + oxidized 2[4Fe-4S]-[ferredoxin] + 2 ADP + 2 phosphate = protochlorophyllide a + reduced 2[4Fe-4S]-[ferredoxin] + 2 ATP + 2 H2O. It functions in the pathway porphyrin-containing compound metabolism; chlorophyll biosynthesis (light-independent). In terms of biological role, component of the dark-operative protochlorophyllide reductase (DPOR) that uses Mg-ATP and reduced ferredoxin to reduce ring D of protochlorophyllide (Pchlide) to form chlorophyllide a (Chlide). This reaction is light-independent. The L component serves as a unique electron donor to the NB-component of the complex, and binds Mg-ATP. This is Light-independent protochlorophyllide reductase iron-sulfur ATP-binding protein from Synechococcus sp. (strain CC9605).